A 435-amino-acid polypeptide reads, in one-letter code: Mitogen-activated protein kinase HOG1 (435 aa).

N-acetylthreonine is present on Thr-2. In terms of domain architecture, Protein kinase spans 23–302 (YNDLNPVGMG…AADALAHPYS (280 aa)). ATP contacts are provided by residues 29–37 (VGMGAFGLV) and Lys-52. The active-site Proton acceptor is the Asp-144. The arsenite site is built by Cys-156 and Cys-161. The residue at position 174 (Thr-174) is a Phosphothreonine; by PBS2. The short motif at 174-176 (TGY) is the TXY element. Tyr-176 carries the post-translational modification Phosphotyrosine; by PBS2. Cys-205 contacts arsenite.

Belongs to the protein kinase superfamily. Ser/Thr protein kinase family. MAP kinase subfamily. HOG1 sub-subfamily. As to quaternary structure, interacts with CDC37, HOT1, KIN28, PTP2, PTP3, RBP1, RCK2, RPD3, SIC1, SMP1 and SIN4. Requires Mg(2+) as cofactor. Post-translationally, activated by PBS2-mediated concomitant phosphorylation at Thr-174 and Tyr-176. Dually phosphorylated on Thr-174 and Tyr-176, which activates the enzyme.

It is found in the cytoplasm. The protein resides in the nucleus. It carries out the reaction L-seryl-[protein] + ATP = O-phospho-L-seryl-[protein] + ADP + H(+). It catalyses the reaction L-threonyl-[protein] + ATP = O-phospho-L-threonyl-[protein] + ADP + H(+). With respect to regulation, activated by tyrosine and threonine phosphorylation. Inactivated by dephosphorylation via recruitment of PTC1 to the PBS2-HOG1 complex after adaptation to osmotic stress. PTP2 and PTP3 inactivate HOG1 by dephosphorylating Tyr-176, while the PP2Cs PTC1 and PTC2 or PTC3 dephosphorylate Thr-174 in the activation loop. Proline-directed serine/threonine-protein kinase involved in a signal transduction pathway that is activated by changes in the osmolarity of the extracellular environment. Controls osmotic regulation of transcription via the stress response element (STRE) in promoters of target genes. Upon osmotic shock, associates with the SKO1-SSN6-TUP1 complex, phosphorylates SKO1, and converts it into an activator that subsequently recruits Swi/Snf and SAGA complexes. Activates the SMP1 transcription factor and the RCK2 kinase, both also involved in the regulation of the expression of a subset of osmotic stress-related genes. Phosphorylation of HSL1 by HOG1 leads to a G2 arrest essential for cell survival at high osmolarity. Also mediates cell-cycle arrest in G1 phase by the dual targeting of SIC1. Phosphorylates methyltransferase DOT1 at least on 'Ser-565' and 'Thr-576'. Regulates MFA2 ARE-mediated translation in response to carbon source. Targets RPD3 histone deacetylase to osmoresponsive promoters to induce gene expression on stress. Required for the Golgi apparatus localization of MNN1. Plays an essential role in maintaining water homeostasis, arsenite detoxification, copper-resistance, cold-resistance, hydrogen peroxide response, adaptation to citric acid stress, and repression of the mating pathway activity. Functions as an arsenic sensor and effector via direct binding to arsenic and subsequent phosphorylation of the ARR1 transcription factor. The polypeptide is Mitogen-activated protein kinase HOG1 (HOG1) (Saccharomyces cerevisiae (strain ATCC 204508 / S288c) (Baker's yeast)).